The sequence spans 317 residues: Glutathione synthetase (317 aa).

Residues Lys126–Ala311 form the ATP-grasp domain. Ala152 to Gly208 contributes to the ATP binding site. Residues Glu282 and Asn284 each coordinate Mg(2+).

This sequence belongs to the prokaryotic GSH synthase family. Requires Mg(2+) as cofactor. It depends on Mn(2+) as a cofactor.

The catalysed reaction is gamma-L-glutamyl-L-cysteine + glycine + ATP = glutathione + ADP + phosphate + H(+). It functions in the pathway sulfur metabolism; glutathione biosynthesis; glutathione from L-cysteine and L-glutamate: step 2/2. The polypeptide is Glutathione synthetase (Pseudomonas aeruginosa (strain ATCC 15692 / DSM 22644 / CIP 104116 / JCM 14847 / LMG 12228 / 1C / PRS 101 / PAO1)).